We begin with the raw amino-acid sequence, 408 residues long: tRNA pseudouridine synthase D (408 aa).

Catalysis depends on D76, which acts as the Nucleophile. The region spanning 149–362 is the TRUD domain; sequence GFINYYDSQR…NSFERKVRIL (214 aa).

Belongs to the pseudouridine synthase TruD family.

The enzyme catalyses uridine(13) in tRNA = pseudouridine(13) in tRNA. In terms of biological role, responsible for synthesis of pseudouridine from uracil-13 in transfer RNAs. This Leptospira interrogans serogroup Icterohaemorrhagiae serovar Lai (strain 56601) protein is tRNA pseudouridine synthase D.